Here is a 340-residue protein sequence, read N- to C-terminus: Fructose-1,6-bisphosphatase, cytosolic (340 aa).

5 residues coordinate Mg(2+): Glu71, Glu100, Asp121, Leu123, and Asp124. Substrate-binding positions include 124 to 127 (DGSS), Asn215, Tyr247, Tyr267, and Lys277. Mg(2+) is bound at residue Glu283.

This sequence belongs to the FBPase class 1 family. Mg(2+) is required as a cofactor.

Its subcellular location is the cytoplasm. It carries out the reaction beta-D-fructose 1,6-bisphosphate + H2O = beta-D-fructose 6-phosphate + phosphate. In Solanum tuberosum (Potato), this protein is Fructose-1,6-bisphosphatase, cytosolic.